The sequence spans 212 residues: Riboflavin kinase (212 aa).

An H-T-H motif-like region spans residues 1–87 (MKMKTLFLLI…YEEISTALYS (87 aa)). The segment at 88 to 212 (GFIVGEVISG…DGDKVRIEVV (125 aa)) is riboflavin kinase. Residue 97-102 (GIGEGA) participates in CDP binding. Mg(2+)-binding residues include T124 and N126. Positions 180 and 188 each coordinate FMN. 193-196 (VKLR) contacts CDP.

The protein belongs to the archaeal riboflavin kinase family. Requires Mg(2+) as cofactor.

It catalyses the reaction riboflavin + CTP = CDP + FMN + H(+). It functions in the pathway cofactor biosynthesis; FMN biosynthesis; FMN from riboflavin (CTP route): step 1/1. Its function is as follows. Catalyzes the CTP-dependent phosphorylation of riboflavin (vitamin B2) to form flavin mononucleotide (FMN). The sequence is that of Riboflavin kinase (ribK) from Pyrococcus abyssi (strain GE5 / Orsay).